The chain runs to 427 residues: Outer capsid protein P8 (427 aa).

Belongs to the phytoreovirus outer capsid protein P8 family. As to quaternary structure, homotrimer. Homomultimer.

It localises to the virion. The protein localises to the host cytoplasm. Functionally, capsid protein which self-assembles to form the outer icosahedral capsid with a T=13 symmetry, about 70 nm in diameter and consisting of 780 molecules capsid proteins. In Catharanthus roseus (Madagascar periwinkle), this protein is Outer capsid protein P8.